Consider the following 239-residue polypeptide: MKSGKFQTKGFKFKQFCIEGGESGMPVSTDGVMLGAWMESPSPAHILDIGTGTGLLALMCAQRFPDAKITAVDIETTAVEAASHNFSHSPWHDRLSVQHTDVLIFSPPQRFQRIVCNPPYFNTGEQAKQSQRATARHTDSLRHDALLKCCYQLLDAEGKASFVLPITEGELFIELALTQGWSLSRLCRVQPSEKKPVHRLLFELAKQPCDTQESHLIIHSSDGYSDDFVRLTHEFYLKM.

Belongs to the methyltransferase superfamily. tRNA (adenine-N(6)-)-methyltransferase family.

The protein resides in the cytoplasm. The catalysed reaction is adenosine(37) in tRNA1(Val) + S-adenosyl-L-methionine = N(6)-methyladenosine(37) in tRNA1(Val) + S-adenosyl-L-homocysteine + H(+). Specifically methylates the adenine in position 37 of tRNA(1)(Val) (anticodon cmo5UAC). This Vibrio parahaemolyticus serotype O3:K6 (strain RIMD 2210633) protein is tRNA1(Val) (adenine(37)-N6)-methyltransferase.